Consider the following 209-residue polypeptide: FMN-dependent NADH:quinone oxidoreductase (209 aa).

Residues Ser-9 and 15–17 (SNS) each bind FMN.

Belongs to the azoreductase type 1 family. In terms of assembly, homodimer. Requires FMN as cofactor.

The catalysed reaction is 2 a quinone + NADH + H(+) = 2 a 1,4-benzosemiquinone + NAD(+). It carries out the reaction N,N-dimethyl-1,4-phenylenediamine + anthranilate + 2 NAD(+) = 2-(4-dimethylaminophenyl)diazenylbenzoate + 2 NADH + 2 H(+). Functionally, quinone reductase that provides resistance to thiol-specific stress caused by electrophilic quinones. Also exhibits azoreductase activity. Catalyzes the reductive cleavage of the azo bond in aromatic azo compounds to the corresponding amines. This Bordetella parapertussis (strain 12822 / ATCC BAA-587 / NCTC 13253) protein is FMN-dependent NADH:quinone oxidoreductase.